Reading from the N-terminus, the 353-residue chain is C-C chemokine receptor type 8 (353 aa).

Over methionine 1–methionine 33 the chain is Extracellular. N-linked (GlcNAc...) asparagine glycosylation occurs at asparagine 8. A helical transmembrane segment spans residues leucine 34–cysteine 61. The Cytoplasmic portion of the chain corresponds to lysine 62–tyrosine 71. The helical transmembrane segment at leucine 72 to histidine 91 threads the bilayer. Over asparagine 92–lysine 105 the chain is Extracellular. The cysteines at positions 104 and 181 are disulfide-linked. Residues valine 106–valine 127 traverse the membrane as a helical segment. At aspartate 128 to threonine 144 the chain is on the cytoplasmic side. Residues alanine 145–phenylalanine 169 form a helical membrane-spanning segment. At tyrosine 170–isoleucine 200 the chain is on the extracellular side. A helical transmembrane segment spans residues asparagine 201–leucine 220. Residues glutamine 221–lysine 236 are Cytoplasmic-facing. The chain crosses the membrane as a helical span at residues leucine 237–leucine 261. At histidine 262–leucine 278 the chain is on the extracellular side. A helical transmembrane segment spans residues alanine 279–glycine 302. Residues glutamate 303–leucine 353 lie on the Cytoplasmic side of the membrane.

This sequence belongs to the G-protein coupled receptor 1 family. Expressed in thymus.

The protein localises to the cell membrane. Functionally, receptor for the CCL1/SCY1/TCA-3 chemokine. The chain is C-C chemokine receptor type 8 (Ccr8) from Mus musculus (Mouse).